An 868-amino-acid chain; its full sequence is Paladin (868 aa).

Gly-2 carries the N-myristoyl glycine lipid modification.

Belongs to the paladin family.

It localises to the cytoplasm. Its subcellular location is the cytosol. The protein is Paladin (PALD1) of Gallus gallus (Chicken).